The sequence spans 63 residues: Large ribosomal subunit protein uL29 (63 aa).

Belongs to the universal ribosomal protein uL29 family.

The protein is Large ribosomal subunit protein uL29 (rpmC) of Buchnera aphidicola subsp. Acyrthosiphon kondoi (Acyrthosiphon kondoi symbiotic bacterium).